Consider the following 231-residue polypeptide: Cytidylate kinase (231 aa).

An ATP-binding site is contributed by glycine 11–threonine 19.

Belongs to the cytidylate kinase family. Type 1 subfamily.

It is found in the cytoplasm. The enzyme catalyses CMP + ATP = CDP + ADP. It catalyses the reaction dCMP + ATP = dCDP + ADP. The sequence is that of Cytidylate kinase from Porphyromonas gingivalis (strain ATCC BAA-308 / W83).